We begin with the raw amino-acid sequence, 416 residues long: 3-hydroxy-3-methylglutaryl coenzyme A reductase AN1593 (416 aa).

Glu-103 serves as the catalytic Charge relay system. N-linked (GlcNAc...) asparagine glycosylation occurs at Asn-167. Residue Lys-236 is the Charge relay system of the active site. An N-linked (GlcNAc...) asparagine glycan is attached at Asn-277. Asp-312 acts as the Charge relay system in catalysis. Residues 380-400 (LALLVAAGVLAGELSLCSALS) form a helical membrane-spanning segment. The active-site Proton donor is the His-408.

This sequence belongs to the HMG-CoA reductase family.

The protein resides in the membrane. It catalyses the reaction (R)-mevalonate + 2 NADP(+) + CoA = (3S)-3-hydroxy-3-methylglutaryl-CoA + 2 NADPH + 2 H(+). It participates in metabolic intermediate biosynthesis; (R)-mevalonate biosynthesis; (R)-mevalonate from acetyl-CoA: step 3/3. In terms of biological role, 3-hydroxy-3-methylglutaryl coenzyme A reductase; part of the gene cluster that mediates the biosynthesis of the diterpene ent-pimara-8(14),15-diene (PD). Within the cluster, the HMG-CoA reductase AN1593 functions in the mevalonate pathway, which produces isoprenoid precursors. The geranylgeranyl pyrophosphate (GGPP) synthase AN1592 is needed in the formation of GGPP, the precursor for diterpenes. Lastly, the pimaradiene synthase pbcA performs the 2 cyclization steps that convert GGPP to ent-pimara-8(14),15-diene. The putative roles of the remaining cluster enzymes in ent-pimara-8(14),15-diene biosynthesis is unclear. The cytochrome P450 monooxygenase AN1598, the glutathione S-transferase AN1595, the oxidoreductases AN1596 and AN1597 probably function as decorative enzymes. It is possible that in biological conditions the compound is oxidized to ent-pimara-8(14),15-dien-19-oic acid, which is a bioactive diterpene compound predominant in many plant extracts. The protein is 3-hydroxy-3-methylglutaryl coenzyme A reductase AN1593 of Emericella nidulans (strain FGSC A4 / ATCC 38163 / CBS 112.46 / NRRL 194 / M139) (Aspergillus nidulans).